A 146-amino-acid chain; its full sequence is Snaclec coagulation factor IX/factor X-binding protein subunit B (146 aa).

Positions 1-23 (MGRFIFMSFGFLVVFLSLSGTAA) are cleaved as a signal peptide. Residues 24–146 (DCPSDWSSYE…MAQFVCEFQA (123 aa)) form the C-type lectin domain. Intrachain disulfides connect C25-C36, C53-C142, and C119-C134. Ca(2+)-binding residues include S64, Q66, and E70. Ca(2+) is bound at residue E143.

It belongs to the snaclec family. As to quaternary structure, heterodimer with subunit A of IX/X-bp or IX-bp; disulfide-linked. As to expression, expressed by the venom gland.

It localises to the secreted. In terms of biological role, when linked to subunit A of IX/X-bp, anticoagulant protein which binds to the gamma-carboxyglutamic acid-domain regions of factors IX (F9) and factor X (10) in the presence of calcium with a 1 to 1 stoichiometry. Functionally, when linked to subunit A of IX-bp, anticoagulant protein which binds to the gamma-carboxyglutamic acid-domain regions of factor IX (but not to factor X) in the presence of calcium with a 1 to 1 stoichiometry. This is Snaclec coagulation factor IX/factor X-binding protein subunit B from Protobothrops flavoviridis (Habu).